Consider the following 180-residue polypeptide: Napin (180 aa).

An N-terminal signal peptide occupies residues 1–21 (MANKLFLVSATLAFFFLLTNA). 2 consecutive propeptides follow at residues 22 to 38 (SIYR…ATNP) and 75 to 94 (PSWT…NPQG).

This sequence belongs to the 2S seed storage albumins family. The mature protein consists of a small and a large chain linked by disulfide bonds. In terms of tissue distribution, cotyledons and the axis.

The small, basic, water-soluble napins are one of the two major kinds of storage proteins synthesized in the seed during its maturation. The protein is Napin (NAP1) of Brassica napus (Rape).